The sequence spans 127 residues: uncharacterized protein (127 aa).

2 helical membrane-spanning segments follow: residues 13 to 35 (ILLLISIFFLVCIISLVGIGIIF) and 57 to 81 (AVLIVLGVFAICFMIIQLVISIMIW).

The protein resides in the cell membrane. This is an uncharacterized protein from Mycoplasma genitalium (strain ATCC 33530 / DSM 19775 / NCTC 10195 / G37) (Mycoplasmoides genitalium).